The following is a 266-amino-acid chain: 3-methyl-2-oxobutanoate hydroxymethyltransferase (266 aa).

Residues D45 and D84 each coordinate Mg(2+). 3-methyl-2-oxobutanoate-binding positions include 45 to 46 (DS), D84, and K112. A Mg(2+)-binding site is contributed by E114. The active-site Proton acceptor is E181.

This sequence belongs to the PanB family. In terms of assembly, homodecamer; pentamer of dimers. Mg(2+) is required as a cofactor.

The protein localises to the cytoplasm. The catalysed reaction is 3-methyl-2-oxobutanoate + (6R)-5,10-methylene-5,6,7,8-tetrahydrofolate + H2O = 2-dehydropantoate + (6S)-5,6,7,8-tetrahydrofolate. The protein operates within cofactor biosynthesis; (R)-pantothenate biosynthesis; (R)-pantoate from 3-methyl-2-oxobutanoate: step 1/2. Catalyzes the reversible reaction in which hydroxymethyl group from 5,10-methylenetetrahydrofolate is transferred onto alpha-ketoisovalerate to form ketopantoate. This Pseudomonas savastanoi pv. phaseolicola (strain 1448A / Race 6) (Pseudomonas syringae pv. phaseolicola (strain 1448A / Race 6)) protein is 3-methyl-2-oxobutanoate hydroxymethyltransferase.